Reading from the N-terminus, the 121-residue chain is uncharacterized protein (121 aa).

A signal peptide spans 1–31 (MILNNKGFIRILEATIAGIMVILVFSYLVMS).

The protein to B.burgdorferi BB0465 N-terminal region.

This is an uncharacterized protein from Methanocaldococcus jannaschii (strain ATCC 43067 / DSM 2661 / JAL-1 / JCM 10045 / NBRC 100440) (Methanococcus jannaschii).